The primary structure comprises 401 residues: ATP-dependent RNA helicase eIF4A (401 aa).

The Q motif signature appears at Asp28–Gln56. The region spanning Ile59–Ile229 is the Helicase ATP-binding domain. An ATP-binding site is contributed by Ala72–Thr79. The short motif at Asp177–Asp180 is the DEAD box element. A Helicase C-terminal domain is found at Gly240–Ile401.

The protein belongs to the DEAD box helicase family. eIF4A subfamily. In terms of assembly, component of the eIF4F complex, which composition varies with external and internal environmental conditions. It is composed of at least eIF4A, eIF4E and eIF4G.

The protein resides in the cytoplasm. The enzyme catalyses ATP + H2O = ADP + phosphate + H(+). Functionally, ATP-dependent RNA helicase which is a subunit of the eIF4F complex involved in cap recognition and is required for mRNA binding to ribosome. In the current model of translation initiation, eIF4A unwinds RNA secondary structures in the 5'-UTR of mRNAs which is necessary to allow efficient binding of the small ribosomal subunit, and subsequent scanning for the initiator codon. This chain is ATP-dependent RNA helicase eIF4A (TIF1), found in Cryptococcus neoformans var. neoformans serotype D (strain B-3501A) (Filobasidiella neoformans).